The chain runs to 368 residues: Chaperone protein DnaJ (368 aa).

Residues 5-69 form the J domain; the sequence is DYYEVLGVAR…NQRARYDQFG (65 aa). The CR-type zinc finger occupies 125–207; sequence GVEKVITIPV…CRGAGRVRKN (83 aa). Residues Cys-138, Cys-141, Cys-155, Cys-158, Cys-181, Cys-184, Cys-195, and Cys-198 each coordinate Zn(2+). CXXCXGXG motif repeat units lie at residues 138 to 145, 155 to 162, 181 to 188, and 195 to 202; these read CGTCHGSG, CKRCGGSG, CSTCHGRG, and CETCRGAG.

It belongs to the DnaJ family. In terms of assembly, homodimer. It depends on Zn(2+) as a cofactor.

It localises to the cytoplasm. Participates actively in the response to hyperosmotic and heat shock by preventing the aggregation of stress-denatured proteins and by disaggregating proteins, also in an autonomous, DnaK-independent fashion. Unfolded proteins bind initially to DnaJ; upon interaction with the DnaJ-bound protein, DnaK hydrolyzes its bound ATP, resulting in the formation of a stable complex. GrpE releases ADP from DnaK; ATP binding to DnaK triggers the release of the substrate protein, thus completing the reaction cycle. Several rounds of ATP-dependent interactions between DnaJ, DnaK and GrpE are required for fully efficient folding. Also involved, together with DnaK and GrpE, in the DNA replication of plasmids through activation of initiation proteins. This is Chaperone protein DnaJ from Exiguobacterium sibiricum (strain DSM 17290 / CCUG 55495 / CIP 109462 / JCM 13490 / 255-15).